Reading from the N-terminus, the 1388-residue chain is MSRPPPTGKMPGAPEAAPGDGAGAGRQRKLEALIRDPRSPINVESLLDGLNSLVLDLDFPALRKNKNIDNFLNRYEKIVKKIRGLQMKAEDYDVVKVIGRGAFGEVQLVRHKASQKVYAMKLLSKFEMIKRSDSAFFWEERDIMAFANSPWVVQLFCAFQDDRYLYMVMEYMPGGDLVNLMSNYDVPEKWAKFYTAEVVLALDAIHSMGLIHRDVKPDNMLLDKHGHLKLADFGTCMKMDETGMVHCDTAVGTPDYISPEVLKSQGGDGYYGRECDWWSVGVFLFEMLVGDTPFYADSLVGTYSKIMDHKNSLCFPEDTEISKHAKNLICAFLTDREVRLGRNGVEEIKQHPFFKNDQWNWDNIRETAAPVVPELSSDIDSSNFDDIEDDKGDVETFPIPKAFVGNQLPFIGFTYFRENLLLSDSPPCRENDAIQTRKSEESQEIQKKLYALEEHLSSEVQAKEELEQKCKSINTRLEKTAKELEEEITLRKSVESTLRQLEREKALLQHKNAEYQRKADHEADKKRNLENDVNSLKDQLEDLKKRNQSSQISTEKVNQLQKQLDEANALLRTESDTAARLRKTQAESSKQIQQLESNNRDLQDKNCLLETAKLKLEKEFINLQSALESERRDRTHGSEIINDLQGRISGLEEDLKTGKALLAKVELEKRQLQEKLTDLEKEKSNMEIDMTYQLKVIQQSLEQEEAEHKTTKARLADKNKIYESIEEAKSEAMKEMEKKLLEERSLKQKVENLLLEAEKRCSILDCDLKQSQQKLNELLKQKDVLNEDVRNLTLKIEQETQKRCLMQNDLKMQTQQVNTLKMSEKQIKQENNHLMEMKMNLEKQNTELRKERQDADGQMKELQDQLEAEQYFSTLYKTQVRELKEENEEKTKLCKELQQKKQDLQDERDSLAAQLEITLTKADSEQLARSIAEEQYSDLEKEKIMKELEIKEMMARHKQELTEKDTTIASLEETNRTLTSDVANLANEKEELNNKLKDSQEQLSKLKDEEMSAAAIKAQFEKQLLNERTLKTQAVNKLAEIMNRKEPVKRGSDTDVRRKEKENRKLHMELKSEREKLTQQMIKYQKELNEMQAQIAEESQIRIELQMTLDSKDSDIEQLRSQLQALHIGMDSSSIGSGPGDAEPDDGFPESRLEGWLSLPVRNNTKKFGWVKKYVIVSSKKILFYDSEQDKEQSNPYMVLDIDKLFHVRPVTQTDVYRADAKEIPRIFQILYANEGESKKEPEFPVEPVGEKSNYICHKGHEFIPTLYHFPTNCEACMKPLWHMFKPPPALECRRCHIKCHKDHMDKKEEIIAPCKVYYDISSAKNLLLLANSTEEQQKWVSRLVKKIPKKPPAPDPFARSSPRTSMKIQQNQSIRRPSRQLAPNKPS.

A disordered region spans residues 1–26 (MSRPPPTGKMPGAPEAAPGDGAGAGR). One can recognise a Protein kinase domain in the interval 92 to 354 (YDVVKVIGRG…VEEIKQHPFF (263 aa)). ATP is bound by residues 98–106 (IGRGAFGEV) and Lys121. The active-site Proton acceptor is Asp214. Positions 357-425 (DQWNWDNIRE…FRENLLLSDS (69 aa)) constitute an AGC-kinase C-terminal domain. An interaction with PPP1R12A region spans residues 363–784 (NIRETAAPVV…LNELLKQKDV (422 aa)). Residues 373-420 (PELSSDIDSSNFDDIEDDKGDVETFPIPKAFVGNQLPFIGFTYFRENL) are interaction with NPM1. Thr414 carries the phosphothreonine; by ROCK2 modification. A coiled-coil region spans residues 439 to 1131 (SEESQEIQKK…QLQALHIGMD (693 aa)). The REM-1 domain occupies 497–573 (TLRQLEREKA…LDEANALLRT (77 aa)). Residues 512–530 (NAEYQRKADHEADKKRNLE) are compositionally biased toward basic and acidic residues. Residues 512-532 (NAEYQRKADHEADKKRNLEND) form a disordered region. Tyr722 bears the Phosphotyrosine; by SRC mark. Residues 979-1047 (TSDVANLANE…LAEIMNRKEP (69 aa)) enclose the RhoBD domain. Positions 979–1047 (TSDVANLANE…LAEIMNRKEP (69 aa)) are RHOA binding. A Phosphoserine modification is found at Ser1137. The PH domain occupies 1150-1349 (ESRLEGWLSL…WVSRLVKKIP (200 aa)). Thr1212 is subject to Phosphothreonine. The segment at 1260–1315 (GHEFIPTLYHFPTNCEACMKPLWHMFKPPPALECRRCHIKCHKDHMDKKEEIIAPC) adopts a Phorbol-ester/DAG-type zinc-finger fold. The disordered stretch occupies residues 1345–1388 (VKKIPKKPPAPDPFARSSPRTSMKIQQNQSIRRPSRQLAPNKPS). 2 positions are modified to phosphoserine: Ser1362 and Ser1374. Residues 1362–1376 (SPRTSMKIQQNQSIR) show a composition bias toward polar residues.

Belongs to the protein kinase superfamily. AGC Ser/Thr protein kinase family. As to quaternary structure, homodimer. Interacts with IRS1. Interacts with RAF1. Interacts with RHOA (activated by GTP), RHOB and RHOC. Interacts with PPP1R12A. Interacts with EP300. Interacts with CHORDC1. Interacts with BRCA2. Interacts with NPM1; this interaction enhances ROCK2 activity. Interacts with SORL1. Interacts with PJVK. The cofactor is Mg(2+). Post-translationally, autophosphorylated. Phosphorylation at Tyr-722 reduces its binding to RHOA and is crucial for focal adhesion dynamics. Dephosphorylation by PTPN11 stimulates its RHOA binding activity. Cleaved by granzyme B during apoptosis. This leads to constitutive activation of the kinase and membrane blebbing. Highly expressed in brain, heart, lung, liver, stomach, spleen, kidney, testis, muscle, embryo and placenta. Isoform 2 is expressed predominantly in the skeletal muscle.

It localises to the cytoplasm. The protein resides in the cell membrane. Its subcellular location is the nucleus. The protein localises to the cytoskeleton. It is found in the microtubule organizing center. It localises to the centrosome. It catalyses the reaction L-seryl-[protein] + ATP = O-phospho-L-seryl-[protein] + ADP + H(+). It carries out the reaction L-threonyl-[protein] + ATP = O-phospho-L-threonyl-[protein] + ADP + H(+). Its activity is regulated as follows. Activated by RHOA binding. Inhibited by Y-27632. Functionally, protein kinase which is a key regulator of actin cytoskeleton and cell polarity. Involved in regulation of smooth muscle contraction, actin cytoskeleton organization, stress fiber and focal adhesion formation, neurite retraction, cell adhesion and motility via phosphorylation of ADD1, BRCA2, CNN1, EZR, DPYSL2, EP300, MSN, MYL9/MLC2, NPM1, RDX, PPP1R12A and VIM. Phosphorylates SORL1 and IRF4. Acts as a negative regulator of VEGF-induced angiogenic endothelial cell activation. Positively regulates the activation of p42/MAPK1-p44/MAPK3 and of p90RSK/RPS6KA1 during myogenic differentiation. Plays an important role in the timely initiation of centrosome duplication. Inhibits keratinocyte terminal differentiation. May regulate closure of the eyelids and ventral body wall through organization of actomyosin bundles. Plays a critical role in the regulation of spine and synaptic properties in the hippocampus. Plays a role in placental homeostasis during the perinatal period. Plays an important role in generating the circadian rhythm of the aortic myofilament Ca(2+) sensitivity and vascular contractility by modulating the myosin light chain phosphorylation. This is Rho-associated protein kinase 2 (Rock2) from Mus musculus (Mouse).